Consider the following 342-residue polypeptide: uncharacterized protein (342 aa).

Belongs to the proline racemase family.

This is an uncharacterized protein from Brucella canis (strain ATCC 23365 / NCTC 10854 / RM-666).